The sequence spans 606 residues: Probable translation initiation factor IF-2 (606 aa).

The region spanning 11 to 230 (IRQPIVVVLG…LTGLVQRFMK (220 aa)) is the tr-type G domain. Positions 20–27 (GHVDHGKT) are G1. 20–27 (GHVDHGKT) contacts GTP. Residues 45 to 49 (EITQH) form a G2 region. Residues 85 to 88 (DTPG) form a G3 region. Residues 85-89 (DTPGH) and 139-142 (NKID) each bind GTP. The tract at residues 139-142 (NKID) is G4. Positions 207-209 (SAK) are G5.

Belongs to the TRAFAC class translation factor GTPase superfamily. Classic translation factor GTPase family. IF-2 subfamily.

Functionally, function in general translation initiation by promoting the binding of the formylmethionine-tRNA to ribosomes. Seems to function along with eIF-2. The chain is Probable translation initiation factor IF-2 from Staphylothermus marinus (strain ATCC 43588 / DSM 3639 / JCM 9404 / F1).